The following is a 235-amino-acid chain: Carboxy-S-adenosyl-L-methionine synthase (235 aa).

S-adenosyl-L-methionine is bound by residues Tyr35, 60-62, 83-84, Asn124, and Arg191; these read GCS and DN.

It belongs to the class I-like SAM-binding methyltransferase superfamily. Cx-SAM synthase family. In terms of assembly, homodimer.

It catalyses the reaction prephenate + S-adenosyl-L-methionine = carboxy-S-adenosyl-L-methionine + 3-phenylpyruvate + H2O. Its function is as follows. Catalyzes the conversion of S-adenosyl-L-methionine (SAM) to carboxy-S-adenosyl-L-methionine (Cx-SAM). This Campylobacter jejuni subsp. doylei (strain ATCC BAA-1458 / RM4099 / 269.97) protein is Carboxy-S-adenosyl-L-methionine synthase.